We begin with the raw amino-acid sequence, 457 residues long: Siroheme synthase (457 aa).

Positions 1-204 are precorrin-2 dehydrogenase /sirohydrochlorin ferrochelatase; sequence MDHLPIFCQL…NDQKAITETT (204 aa). NAD(+) contacts are provided by residues 22–23 and 43–44; these read DV and LA. Ser128 carries the phosphoserine modification. Residues 216-457 are uroporphyrinogen-III C-methyltransferase; it reads GEVVLVGAGP…RDKLNWFSNH (242 aa). Residue Pro225 participates in S-adenosyl-L-methionine binding. The active-site Proton acceptor is Asp248. The active-site Proton donor is the Lys270. Residues 301–303, Ile306, 331–332, Met382, and Gly411 each bind S-adenosyl-L-methionine; these read GGD and TA.

It in the N-terminal section; belongs to the precorrin-2 dehydrogenase / sirohydrochlorin ferrochelatase family. The protein in the C-terminal section; belongs to the precorrin methyltransferase family.

It carries out the reaction uroporphyrinogen III + 2 S-adenosyl-L-methionine = precorrin-2 + 2 S-adenosyl-L-homocysteine + H(+). The catalysed reaction is precorrin-2 + NAD(+) = sirohydrochlorin + NADH + 2 H(+). It catalyses the reaction siroheme + 2 H(+) = sirohydrochlorin + Fe(2+). It functions in the pathway cofactor biosynthesis; adenosylcobalamin biosynthesis; precorrin-2 from uroporphyrinogen III: step 1/1. The protein operates within cofactor biosynthesis; adenosylcobalamin biosynthesis; sirohydrochlorin from precorrin-2: step 1/1. It participates in porphyrin-containing compound metabolism; siroheme biosynthesis; precorrin-2 from uroporphyrinogen III: step 1/1. Its pathway is porphyrin-containing compound metabolism; siroheme biosynthesis; siroheme from sirohydrochlorin: step 1/1. It functions in the pathway porphyrin-containing compound metabolism; siroheme biosynthesis; sirohydrochlorin from precorrin-2: step 1/1. In terms of biological role, multifunctional enzyme that catalyzes the SAM-dependent methylations of uroporphyrinogen III at position C-2 and C-7 to form precorrin-2 via precorrin-1. Then it catalyzes the NAD-dependent ring dehydrogenation of precorrin-2 to yield sirohydrochlorin. Finally, it catalyzes the ferrochelation of sirohydrochlorin to yield siroheme. In Escherichia fergusonii (strain ATCC 35469 / DSM 13698 / CCUG 18766 / IAM 14443 / JCM 21226 / LMG 7866 / NBRC 102419 / NCTC 12128 / CDC 0568-73), this protein is Siroheme synthase.